Reading from the N-terminus, the 341-residue chain is Glyceraldehyde-3-phosphate dehydrogenase 2 (341 aa).

Residues 12–13 (RI), R78, and T120 each bind NAD(+). Residues 152 to 154 (SCT) and T183 each bind D-glyceraldehyde 3-phosphate. C153 acts as the Nucleophile in catalysis. N184 contacts NAD(+). D-glyceraldehyde 3-phosphate is bound by residues R198, 211–212 (TG), and R234. An NAD(+)-binding site is contributed by N313.

This sequence belongs to the glyceraldehyde-3-phosphate dehydrogenase family. As to quaternary structure, homotetramer.

The protein resides in the cytoplasm. The enzyme catalyses D-glyceraldehyde 3-phosphate + phosphate + NAD(+) = (2R)-3-phospho-glyceroyl phosphate + NADH + H(+). The protein operates within carbohydrate degradation; glycolysis; pyruvate from D-glyceraldehyde 3-phosphate: step 1/5. Functionally, catalyzes the oxidative phosphorylation of glyceraldehyde 3-phosphate (G3P) to 1,3-bisphosphoglycerate (BPG) using the cofactor NAD. The first reaction step involves the formation of a hemiacetal intermediate between G3P and a cysteine residue, and this hemiacetal intermediate is then oxidized to a thioester, with concomitant reduction of NAD to NADH. The reduced NADH is then exchanged with the second NAD, and the thioester is attacked by a nucleophilic inorganic phosphate to produce BPG. This Staphylococcus epidermidis (strain ATCC 35984 / DSM 28319 / BCRC 17069 / CCUG 31568 / BM 3577 / RP62A) protein is Glyceraldehyde-3-phosphate dehydrogenase 2 (gapA2).